We begin with the raw amino-acid sequence, 426 residues long: Glutamate-1-semialdehyde 2,1-aminomutase (426 aa).

Position 265 is an N6-(pyridoxal phosphate)lysine (Lys-265).

It belongs to the class-III pyridoxal-phosphate-dependent aminotransferase family. HemL subfamily. In terms of assembly, homodimer. The cofactor is pyridoxal 5'-phosphate.

It localises to the cytoplasm. It catalyses the reaction (S)-4-amino-5-oxopentanoate = 5-aminolevulinate. It participates in porphyrin-containing compound metabolism; protoporphyrin-IX biosynthesis; 5-aminolevulinate from L-glutamyl-tRNA(Glu): step 2/2. This Salmonella arizonae (strain ATCC BAA-731 / CDC346-86 / RSK2980) protein is Glutamate-1-semialdehyde 2,1-aminomutase.